The sequence spans 433 residues: MESLNALLQGMGLMHLGAGQAIMLLVSLLLLWLAIAKKFEPLLLLPIGFGGLLSNIPEAGLALTALESLLAHHDAGQLAVIAAKLHCAPDVHAIKEALALALPSVQNQMENLAVDMGYTPGVLALFYKVAIGSGVAPLVIFMGVGAMTDFGPLLANPRTLLLGAAAQFGIFATVLGALTLNYFGLISFTLPQAAAIGIIGGADGPTAIYLSGKLAPELLGAIAVAAYSYMALVPLIQPPIMKALTSETERKIRMVQLRTVSKREKILFPVVLLMLVALLLPDAAPLLGMFCFGNLMRESGVVERLSDTVQNGLINIVTIFLGLSVGAKLVADKFLQPQTLGILLLGVIAFGIGTAAGVLMAKLLNLCSKNKINPLIGSAGVSAVPMAARVSNKVGLESDAQNFLLMHAMGPNVAGVIGSAIAAGVMLKYVLAM.

A run of 9 helical transmembrane segments spans residues 13–35, 42–64, 125–147, 160–182, 214–236, 266–288, 308–327, 339–361, and 413–432; these read LMHL…WLAI, LLLL…LALT, LFYK…VGAM, LLLG…TLNY, LAPE…VPLI, ILFP…PLLG, TVQN…SVGA, TLGI…VLMA, and VAGV…YVLA.

It belongs to the GcdB/MmdB/OadB family. As to quaternary structure, heterotrimer of an alpha, a beta and a gamma subunit. The cofactor is Na(+).

The protein localises to the cell membrane. It catalyses the reaction oxaloacetate + 2 Na(+)(in) + H(+) = pyruvate + 2 Na(+)(out) + CO2. Its function is as follows. Catalyzes the decarboxylation of oxaloacetate coupled to Na(+) translocation. The polypeptide is Oxaloacetate decarboxylase beta chain 2 (oadB2) (Salmonella typhimurium (strain LT2 / SGSC1412 / ATCC 700720)).